Consider the following 210-residue polypeptide: MTDDTTKNGPDATAADAAADATAYVENETAQQEPAQPDPIELLKAENGELRDRYLRLAAEMDNLRRRTEREVKDAKSYSVAGFARDMLAVSDNLRRALDAISPETKATADAGLSTLIEGVEMTERAMLSALERHGVRKLEPVGQKFDPNFHQAMFEVPNPDVPNNTVVQVVQAGFTIGERVLRPAMVGVAKGGPKPAEAETNSVFDEKDA.

Disordered stretches follow at residues 1–40 and 191–210; these read MTDD…PDPI and KGGP…EKDA. Residues 11-23 are compositionally biased toward low complexity; the sequence is DATAADAAADATA.

The protein belongs to the GrpE family. As to quaternary structure, homodimer.

It is found in the cytoplasm. In terms of biological role, participates actively in the response to hyperosmotic and heat shock by preventing the aggregation of stress-denatured proteins, in association with DnaK and GrpE. It is the nucleotide exchange factor for DnaK and may function as a thermosensor. Unfolded proteins bind initially to DnaJ; upon interaction with the DnaJ-bound protein, DnaK hydrolyzes its bound ATP, resulting in the formation of a stable complex. GrpE releases ADP from DnaK; ATP binding to DnaK triggers the release of the substrate protein, thus completing the reaction cycle. Several rounds of ATP-dependent interactions between DnaJ, DnaK and GrpE are required for fully efficient folding. The protein is Protein GrpE of Rhizobium johnstonii (strain DSM 114642 / LMG 32736 / 3841) (Rhizobium leguminosarum bv. viciae).